The following is a 233-amino-acid chain: Probable transglycosylase IsaA (233 aa).

The N-terminal stretch at 1–29 is a signal peptide; that stretch reads MKKTIMASSLAVALGVTGYAAGTGHQAHA.

This sequence belongs to the transglycosylase family. IsaA subfamily.

The protein resides in the secreted. Its function is as follows. Is able to cleave peptidoglycan. In Staphylococcus aureus (strain Mu3 / ATCC 700698), this protein is Probable transglycosylase IsaA (isaA).